A 445-amino-acid polypeptide reads, in one-letter code: Phosphoglucosamine mutase (445 aa).

Ser-102 (phosphoserine intermediate) is an active-site residue. Positions 102, 240, 242, and 244 each coordinate Mg(2+). A Phosphoserine modification is found at Ser-102.

The protein belongs to the phosphohexose mutase family. Mg(2+) serves as cofactor. In terms of processing, activated by phosphorylation.

The catalysed reaction is alpha-D-glucosamine 1-phosphate = D-glucosamine 6-phosphate. In terms of biological role, catalyzes the conversion of glucosamine-6-phosphate to glucosamine-1-phosphate. This is Phosphoglucosamine mutase from Mycolicibacterium gilvum (strain PYR-GCK) (Mycobacterium gilvum (strain PYR-GCK)).